Here is a 278-residue protein sequence, read N- to C-terminus: Orotidine 5'-phosphate decarboxylase (278 aa).

Residue Lys-96 is the Proton donor of the active site.

The protein belongs to the OMP decarboxylase family. Type 2 subfamily.

It carries out the reaction orotidine 5'-phosphate + H(+) = UMP + CO2. Its pathway is pyrimidine metabolism; UMP biosynthesis via de novo pathway; UMP from orotate: step 2/2. The chain is Orotidine 5'-phosphate decarboxylase from Salinispora tropica (strain ATCC BAA-916 / DSM 44818 / JCM 13857 / NBRC 105044 / CNB-440).